Reading from the N-terminus, the 276-residue chain is SRR1-like protein (276 aa).

Residue Ser-30 is modified to Phosphoserine. The residue at position 34 (Tyr-34) is a Phosphotyrosine.

This sequence belongs to the SRR1 family.

Possible regulator involved in a circadian clock input pathway. The protein is SRR1-like protein of Drosophila melanogaster (Fruit fly).